Consider the following 111-residue polypeptide: MSELLRARSQSSERGNDQESSQPVGSVIVQEPTEEKRQEEEPPTDNQGIAPSGEIENQAVPAFQGPDMEAFQQELALLKIEDEPGDGPDVREGIMPTFDLTKVLEAGDAQP.

Residues 1-66 form a disordered region; that stretch reads MSELLRARSQ…NQAVPAFQGP (66 aa). A compositionally biased stretch (polar residues) spans 8 to 24; that stretch reads RSQSSERGNDQESSQPV.

This sequence belongs to the GAGE family.

This is P antigen family member 2 (PAGE2) from Homo sapiens (Human).